Here is a 357-residue protein sequence, read N- to C-terminus: uncharacterized protein (357 aa).

The stretch at 173–211 (VLPILEKLMQDESLYVRKSVANNLNDISKTHPHLLRKVA) is one HEAT repeat.

This is an uncharacterized protein from Bacillus subtilis (strain 168).